We begin with the raw amino-acid sequence, 306 residues long: Ornithine carbamoyltransferase (306 aa).

Residues 51–54, Gln-78, Arg-102, and 129–132 each bind carbamoyl phosphate; these read STRT and HPCQ. L-ornithine contacts are provided by residues Asn-160, Asp-223, and 227–228; that span reads SM. Carbamoyl phosphate-binding positions include 263–264 and Arg-291; that span reads CL.

This sequence belongs to the aspartate/ornithine carbamoyltransferase superfamily. OTCase family.

Its subcellular location is the cytoplasm. It carries out the reaction carbamoyl phosphate + L-ornithine = L-citrulline + phosphate + H(+). The protein operates within amino-acid biosynthesis; L-arginine biosynthesis; L-arginine from L-ornithine and carbamoyl phosphate: step 1/3. In terms of biological role, reversibly catalyzes the transfer of the carbamoyl group from carbamoyl phosphate (CP) to the N(epsilon) atom of ornithine (ORN) to produce L-citrulline. The protein is Ornithine carbamoyltransferase of Trichormus variabilis (strain ATCC 29413 / PCC 7937) (Anabaena variabilis).